Here is a 129-residue protein sequence, read N- to C-terminus: M-zodatoxin-Lt8b (129 aa).

A signal peptide spans 1–20; the sequence is MKYFVVALALVAAFACIAES. Positions 21 to 60 are excised as a propeptide; that stretch reads KPAESEHELAEVEEENELADLEDAVWLEHLADLSDLEEAR. The Processing quadruplet motif signature appears at 57 to 60; it reads EEAR.

Post-translationally, cleavage of the propeptide depends on the processing quadruplet motif (XXXR, with at least one of X being E). In terms of tissue distribution, expressed by the venom gland.

It is found in the secreted. Insecticidal, cytolytic and antimicrobial peptide. Forms voltage-dependent, ion-permeable channels in membranes. At high concentration causes cell membrane lysis. The polypeptide is M-zodatoxin-Lt8b (cit 1-2) (Lachesana tarabaevi (Spider)).